Here is a 147-residue protein sequence, read N- to C-terminus: Large ribosomal subunit protein uL16c (147 aa).

The span at 1-17 shows a compositional bias: basic residues; sequence MLSPKRTRFRKQHRGRM. A disordered region spans residues 1–20; the sequence is MLSPKRTRFRKQHRGRMKGI.

This sequence belongs to the universal ribosomal protein uL16 family. As to quaternary structure, part of the 50S ribosomal subunit.

The protein localises to the plastid. The protein resides in the chloroplast. The chain is Large ribosomal subunit protein uL16c from Ipomoea purpurea (Common morning glory).